Consider the following 440-residue polypeptide: Glutamyl-tRNA reductase (440 aa).

Residues 50-53, S109, 114-116, and Q120 each bind substrate; these read TCNR and EPQ. C51 acts as the Nucleophile in catalysis. Position 189–194 (189–194) interacts with NADP(+); sequence GAGEMA.

The protein belongs to the glutamyl-tRNA reductase family. In terms of assembly, homodimer.

The enzyme catalyses (S)-4-amino-5-oxopentanoate + tRNA(Glu) + NADP(+) = L-glutamyl-tRNA(Glu) + NADPH + H(+). The protein operates within porphyrin-containing compound metabolism; protoporphyrin-IX biosynthesis; 5-aminolevulinate from L-glutamyl-tRNA(Glu): step 1/2. In terms of biological role, catalyzes the NADPH-dependent reduction of glutamyl-tRNA(Glu) to glutamate 1-semialdehyde (GSA). The protein is Glutamyl-tRNA reductase of Nitratidesulfovibrio vulgaris (strain DP4) (Desulfovibrio vulgaris).